Reading from the N-terminus, the 445-residue chain is C-terminal-binding protein 2 (445 aa).

Arg22 carries the post-translational modification Asymmetric dimethylarginine. NAD(+) contacts are provided by residues Ser106, 186–191 (IGFGRT), Asp210, 243–249 (CNLNEHN), 270–272 (AAR), and Asp296. Arg272 is a catalytic residue. Glu301 is an active-site residue. The active-site Proton donor is the His321. 321-324 (HTAW) is a binding site for NAD(+). The interval 414-445 (THNLPTVAHPSQAPSPNQPTKHGDNREHPNEQ) is disordered. Ser428 is subject to Phosphoserine. Positions 434–445 (KHGDNREHPNEQ) are enriched in basic and acidic residues.

Belongs to the D-isomer specific 2-hydroxyacid dehydrogenase family. Can form homodimers or heterodimers of CTBP1 and CTBP2. Interacts with HIPK2 and ZNF217. Interacts with PRDM16; represses white adipose tissue (WAT)-specific genes expression. Interacts with PNN, NRIP1 and WIZ. Interacts with MCRIP1. In terms of assembly, (Microbial infection) Interacts with human adenovirus 5 E1A protein; this interaction seems to potentiate viral replication. In terms of tissue distribution, ubiquitous. Highest levels in heart, skeletal muscle, and pancreas.

The protein resides in the nucleus. Its subcellular location is the synapse. In terms of biological role, corepressor targeting diverse transcription regulators. Functions in brown adipose tissue (BAT) differentiation. Isoform 2 probably acts as a scaffold for specialized synapses. The polypeptide is C-terminal-binding protein 2 (CTBP2) (Homo sapiens (Human)).